Reading from the N-terminus, the 306-residue chain is Porphobilinogen deaminase (306 aa).

Cys-239 carries the S-(dipyrrolylmethanemethyl)cysteine modification.

The protein belongs to the HMBS family. As to quaternary structure, monomer. Dipyrromethane is required as a cofactor.

It carries out the reaction 4 porphobilinogen + H2O = hydroxymethylbilane + 4 NH4(+). It functions in the pathway porphyrin-containing compound metabolism; protoporphyrin-IX biosynthesis; coproporphyrinogen-III from 5-aminolevulinate: step 2/4. Functionally, tetrapolymerization of the monopyrrole PBG into the hydroxymethylbilane pre-uroporphyrinogen in several discrete steps. The chain is Porphobilinogen deaminase from Helicobacter pylori (strain P12).